The sequence spans 511 residues: Histidine ammonia-lyase (511 aa).

Residues 142–144 (ASG) constitute a cross-link (5-imidazolinone (Ala-Gly)). Position 143 is a 2,3-didehydroalanine (Ser) (Ser-143).

Belongs to the PAL/histidase family. Contains an active site 4-methylidene-imidazol-5-one (MIO), which is formed autocatalytically by cyclization and dehydration of residues Ala-Ser-Gly.

Its subcellular location is the cytoplasm. The enzyme catalyses L-histidine = trans-urocanate + NH4(+). Its pathway is amino-acid degradation; L-histidine degradation into L-glutamate; N-formimidoyl-L-glutamate from L-histidine: step 1/3. In Caulobacter sp. (strain K31), this protein is Histidine ammonia-lyase.